Here is a 292-residue protein sequence, read N- to C-terminus: 2-dehydro-3-deoxygalactonokinase (292 aa).

Belongs to the DgoK family.

The catalysed reaction is 2-dehydro-3-deoxy-D-galactonate + ATP = 2-dehydro-3-deoxy-6-phospho-D-galactonate + ADP + H(+). It participates in carbohydrate acid metabolism; D-galactonate degradation; D-glyceraldehyde 3-phosphate and pyruvate from D-galactonate: step 2/3. The polypeptide is 2-dehydro-3-deoxygalactonokinase (dgoK) (Escherichia coli (strain K12)).